The chain runs to 112 residues: MSGKRYPEEFKTEAVKQVVDLGYSVASVATRLDITTHSLYAWIKKYGPDSSTNKEQSDAQAEIRRLQKELKRVTDERDILKKAAVDSICQCNTPFNYLFRCFELQCLSRSVV.

The protein belongs to the transposase 8 family.

The sequence is that of Putative transposase YkgN (ykgN) from Escherichia coli (strain K12).